Reading from the N-terminus, the 734-residue chain is Photosystem I P700 chlorophyll a apoprotein A2 (734 aa).

The next 8 helical transmembrane spans lie at 46–69 (IFAS…FHVA), 135–158 (LYTG…LHLQ), 175–199 (LNHH…HVAI), 273–291 (MAHH…GHMY), 330–353 (LHFQ…QHMY), 369–395 (AALY…IFFI), 417–439 (AIIS…LYVH), and 517–535 (FLVH…LILV). [4Fe-4S] cluster is bound by residues Cys559 and Cys568. A run of 2 helical transmembrane segments spans residues 575–596 (AFYL…YWHW) and 643–665 (LSVW…MFLI). His654, Met662, and Tyr670 together coordinate chlorophyll a. Trp671 lines the phylloquinone pocket. The helical transmembrane segment at 707 to 727 (LVGLAHFSVGYIFTYAAFLIA) threads the bilayer.

This sequence belongs to the PsaA/PsaB family. The PsaA/B heterodimer binds the P700 chlorophyll special pair and subsequent electron acceptors. PSI consists of a core antenna complex that captures photons, and an electron transfer chain that converts photonic excitation into a charge separation. The eukaryotic PSI reaction center is composed of at least 11 subunits. P700 is a chlorophyll a/chlorophyll a' dimer, A0 is one or more chlorophyll a, A1 is one or both phylloquinones and FX is a shared 4Fe-4S iron-sulfur center. serves as cofactor.

It is found in the plastid. The protein localises to the chloroplast thylakoid membrane. It catalyses the reaction reduced [plastocyanin] + hnu + oxidized [2Fe-2S]-[ferredoxin] = oxidized [plastocyanin] + reduced [2Fe-2S]-[ferredoxin]. Functionally, psaA and PsaB bind P700, the primary electron donor of photosystem I (PSI), as well as the electron acceptors A0, A1 and FX. PSI is a plastocyanin-ferredoxin oxidoreductase, converting photonic excitation into a charge separation, which transfers an electron from the donor P700 chlorophyll pair to the spectroscopically characterized acceptors A0, A1, FX, FA and FB in turn. Oxidized P700 is reduced on the lumenal side of the thylakoid membrane by plastocyanin. This is Photosystem I P700 chlorophyll a apoprotein A2 from Cucumis sativus (Cucumber).